Here is a 276-residue protein sequence, read N- to C-terminus: Small ribosomal subunit protein uS2 (276 aa).

The interval 226-276 (KKAREERQLAAAREAAGEPKSEDAPAEAAATEEAPATEAPAAEAQQENAAE) is disordered. Over residues 251-276 (AEAAATEEAPATEAPAAEAQQENAAE) the composition is skewed to low complexity.

Belongs to the universal ribosomal protein uS2 family.

This is Small ribosomal subunit protein uS2 from Corynebacterium efficiens (strain DSM 44549 / YS-314 / AJ 12310 / JCM 11189 / NBRC 100395).